Consider the following 209-residue polypeptide: Uracil phosphoribosyltransferase (209 aa).

Residues arginine 79, arginine 104, and 131–139 (DPMLATGGS) each bind 5-phospho-alpha-D-ribose 1-diphosphate. Residues isoleucine 194 and 199–201 (GDA) each bind uracil. Aspartate 200 serves as a coordination point for 5-phospho-alpha-D-ribose 1-diphosphate.

The protein belongs to the UPRTase family. Homodimer. Mg(2+) serves as cofactor.

It catalyses the reaction UMP + diphosphate = 5-phospho-alpha-D-ribose 1-diphosphate + uracil. It functions in the pathway pyrimidine metabolism; UMP biosynthesis via salvage pathway; UMP from uracil: step 1/1. Allosterically activated by GTP. Its function is as follows. Catalyzes the conversion of uracil and 5-phospho-alpha-D-ribose 1-diphosphate (PRPP) to UMP and diphosphate. In Bacillus caldolyticus, this protein is Uracil phosphoribosyltransferase.